A 402-amino-acid polypeptide reads, in one-letter code: Chorismate synthase (402 aa).

NADP(+) is bound by residues R40 and R46. FMN contacts are provided by residues 134-136, 255-256, G299, 314-318, and R340; these read RAS, QA, and KPIAT.

The protein belongs to the chorismate synthase family. Homotetramer. It depends on FMNH2 as a cofactor.

It catalyses the reaction 5-O-(1-carboxyvinyl)-3-phosphoshikimate = chorismate + phosphate. Its pathway is metabolic intermediate biosynthesis; chorismate biosynthesis; chorismate from D-erythrose 4-phosphate and phosphoenolpyruvate: step 7/7. Catalyzes the anti-1,4-elimination of the C-3 phosphate and the C-6 proR hydrogen from 5-enolpyruvylshikimate-3-phosphate (EPSP) to yield chorismate, which is the branch point compound that serves as the starting substrate for the three terminal pathways of aromatic amino acid biosynthesis. This reaction introduces a second double bond into the aromatic ring system. The chain is Chorismate synthase from Leifsonia xyli subsp. xyli (strain CTCB07).